The sequence spans 71 residues: MPVVKVKENEPFDVALRRFKRSCEKAGVLSEVRRREHYEKPTSERKRKKAAAVKRHAKKLSRDNARRTRLY.

Residues 34–44 (RREHYEKPTSE) show a composition bias toward basic and acidic residues. The interval 34–71 (RREHYEKPTSERKRKKAAAVKRHAKKLSRDNARRTRLY) is disordered. Basic residues predominate over residues 45–59 (RKRKKAAAVKRHAKK). A compositionally biased stretch (basic and acidic residues) spans 60–71 (LSRDNARRTRLY).

This sequence belongs to the bacterial ribosomal protein bS21 family.

The polypeptide is Small ribosomal subunit protein bS21 (Idiomarina loihiensis (strain ATCC BAA-735 / DSM 15497 / L2-TR)).